The primary structure comprises 222 residues: Glutathione S-transferase A4 (222 aa).

Position 1 is an N-acetylmethionine (M1). The 81-residue stretch at 3-83 folds into the GST N-terminal domain; the sequence is AKPKLYYFNG…YLAAKYNLYG (81 aa). Residues Y9, 53–55, and 66–68 contribute to the glutathione site; these read GQV and TQT. Residues 85–208 enclose the GST C-terminal domain; it reads DLKERVRIDM…QPGSQRKPPP (124 aa).

It belongs to the GST superfamily. Alpha family. As to quaternary structure, homodimer. Post-translationally, the N-terminus is blocked.

It is found in the cytoplasm. It carries out the reaction RX + glutathione = an S-substituted glutathione + a halide anion + H(+). Conjugation of reduced glutathione to a wide number of exogenous and endogenous hydrophobic electrophiles. The chain is Glutathione S-transferase A4 (Gsta4) from Mus musculus (Mouse).